Here is a 340-residue protein sequence, read N- to C-terminus: N-acetyl-gamma-glutamyl-phosphate reductase (340 aa).

The active site involves Cys146.

This sequence belongs to the NAGSA dehydrogenase family. Type 1 subfamily.

It localises to the cytoplasm. It carries out the reaction N-acetyl-L-glutamate 5-semialdehyde + phosphate + NADP(+) = N-acetyl-L-glutamyl 5-phosphate + NADPH + H(+). It functions in the pathway amino-acid biosynthesis; L-arginine biosynthesis; N(2)-acetyl-L-ornithine from L-glutamate: step 3/4. In terms of biological role, catalyzes the NADPH-dependent reduction of N-acetyl-5-glutamyl phosphate to yield N-acetyl-L-glutamate 5-semialdehyde. The sequence is that of N-acetyl-gamma-glutamyl-phosphate reductase from Streptococcus gordonii (strain Challis / ATCC 35105 / BCRC 15272 / CH1 / DL1 / V288).